Consider the following 87-residue polypeptide: Large ribosomal subunit protein bL27 (87 aa).

Residues methionine 1 to arginine 20 form a disordered region.

It belongs to the bacterial ribosomal protein bL27 family.

The sequence is that of Large ribosomal subunit protein bL27 from Thiobacillus denitrificans (strain ATCC 25259 / T1).